The primary structure comprises 213 residues: MTSLAELRKNYSLGSLDVGDVDRNPFRQFDTWFKQAVDAQLPEPNTMTLATVDPRGRPSARIVLIKGVDERGFVFFTNYESRKGRELAANPYASLLFYWIELERQVRVEGRIVKTSAEESDGYFASRPLGSRIGAWASNQSQVIESRSQLETREREFSLLYGDQPPRPPHWGGYRLVPEAIEFWQGRPSRLHDRLLYTRSDEHSDWQISRLSP.

Substrate-binding positions include 8 to 11 and Lys66; that span reads RKNY. FMN contacts are provided by residues 61–66, 76–77, Arg82, Lys83, and Gln105; these read RIVLIK and FT. Residues Tyr123, Arg127, and Ser131 each contribute to the substrate site. FMN-binding positions include 140–141 and Trp184; that span reads QS. 190 to 192 lines the substrate pocket; sequence RLH. Arg194 serves as a coordination point for FMN.

It belongs to the pyridoxamine 5'-phosphate oxidase family. In terms of assembly, homodimer. Requires FMN as cofactor.

The catalysed reaction is pyridoxamine 5'-phosphate + O2 + H2O = pyridoxal 5'-phosphate + H2O2 + NH4(+). The enzyme catalyses pyridoxine 5'-phosphate + O2 = pyridoxal 5'-phosphate + H2O2. The protein operates within cofactor metabolism; pyridoxal 5'-phosphate salvage; pyridoxal 5'-phosphate from pyridoxamine 5'-phosphate: step 1/1. Its pathway is cofactor metabolism; pyridoxal 5'-phosphate salvage; pyridoxal 5'-phosphate from pyridoxine 5'-phosphate: step 1/1. In terms of biological role, catalyzes the oxidation of either pyridoxine 5'-phosphate (PNP) or pyridoxamine 5'-phosphate (PMP) into pyridoxal 5'-phosphate (PLP). The polypeptide is Pyridoxine/pyridoxamine 5'-phosphate oxidase (Paraburkholderia xenovorans (strain LB400)).